A 353-amino-acid polypeptide reads, in one-letter code: Heterogeneous nuclear ribonucleoproteins A2/B1 (353 aa).

N-acetylmethionine is present on M1. T4 is subject to Phosphothreonine. L5 is covalently cross-linked (Glycyl lysine isopeptide (Lys-Gly) (interchain with G-Cter in SUMO2)). Positions 9–15 (PLERKKR) match the Nuclear localization signal motif. RRM domains are found at residues 21–104 (RKLF…ESGK) and 112–191 (KKLF…LSRQ). K22 is covalently cross-linked (Glycyl lysine isopeptide (Lys-Gly) (interchain with G-Cter in SUMO2)). Position 29 is a phosphoserine (S29). Omega-N-methylarginine is present on R38. S85 is modified (phosphoserine). Position 104 is an N6,N6-dimethyllysine; alternate (K104). K104 participates in a covalent cross-link: Glycyl lysine isopeptide (Lys-Gly) (interchain with G-Cter in SUMO2); alternate. Glycyl lysine isopeptide (Lys-Gly) (interchain with G-Cter in SUMO2) cross-links involve residues K112, K120, and K137. T140 is modified (phosphothreonine). At S149 the chain carries Phosphoserine. Residue K152 forms a Glycyl lysine isopeptide (Lys-Gly) (interchain with G-Cter in SUMO2) linkage. T159 is modified (phosphothreonine). Residues K168 and K173 each participate in a glycyl lysine isopeptide (Lys-Gly) (interchain with G-Cter in SUMO2); alternate cross-link. N6-acetyllysine; alternate is present on residues K168 and K173. Residue T176 is modified to Phosphothreonine. A Glycyl lysine isopeptide (Lys-Gly) (interchain with G-Cter in SUMO2) cross-link involves residue K186. Phosphoserine is present on residues S189 and S201. Residues 193–353 (MQEVQSSRSG…SGGYGGRSRY (161 aa)) are disordered. Positions 202-223 (GRGGNFGFGDSRGGGGNFGPGP) are enriched in gly residues. Residue R203 is modified to Asymmetric dimethylarginine; alternate. R203 is subject to Dimethylated arginine; alternate. R203 bears the Omega-N-methylarginine; alternate mark. S212 carries the post-translational modification Phosphoserine. R213 is subject to Asymmetric dimethylarginine; alternate. A Dimethylated arginine; alternate modification is found at R213. Omega-N-methylarginine; alternate is present on R213. S225 bears the Phosphoserine mark. Omega-N-methylarginine is present on R228. Phosphoserine is present on residues S231 and S236. Residue R238 is modified to Omega-N-methylarginine. S259 is modified (phosphoserine). R266 is modified (asymmetric dimethylarginine; alternate). Position 266 is an omega-N-methylarginine; alternate (R266). A nuclear targeting sequence region spans residues 308–347 (QQPSNYGPMKSGNFGGSRNMGGPYGGGNYGPGGSGGSGGY). Residues 320 to 353 (NFGGSRNMGGPYGGGNYGPGGSGGSGGYGGRSRY) show a composition bias toward gly residues. S324 bears the Phosphoserine mark. An Omega-N-methylarginine modification is found at R325. Y331 carries the post-translational modification Phosphotyrosine. Phosphoserine occurs at positions 341 and 344. Y347 carries the post-translational modification Phosphotyrosine. R350 is subject to Omega-N-methylarginine.

As to quaternary structure, homodimer; dimerization is required for nucleocytoplasmic translocation. Identified in the spliceosome C complex. Identified in a IGF2BP1-dependent mRNP granule complex containing untranslated mRNAs. Interacts with IGF2BP1. Interacts with C9orf72. Interacts with DGCR8. Interacts with TARDBP. Interacts with CKAP5. Interacts with TBK1. Interacts with STING1. Interacts with SRC. Interacts with PPIA/CYPA. Interacts (via C-terminus) with FAM76B; the interaction results in retention of HNRNPA2B1 in the nucleus and inhibition of the NF-kappa-B-mediated inflammatory pathway. Interacts with NF-kappa-B inhibitors NFKBIA and NFKBIE; the interaction may be mediated by the RRM2 domain of HNRNPA2B1, and HNRNPA2B1 may interact simultaneously with FAM76B and either NFKBIA or NFKBIE to form a complex. Post-translationally, sumoylated in exosomes, promoting miRNAs-binding. Asymmetric dimethylation at Arg-266 constitutes the major methylation site. According to a report, methylation affects subcellular location and promotes nuclear localization. According to another report, methylation at Arg-266 does not influence nucleocytoplasmic shuttling.

It is found in the nucleus. The protein localises to the nucleoplasm. Its subcellular location is the cytoplasm. It localises to the cytoplasmic granule. The protein resides in the secreted. It is found in the extracellular exosome. In terms of biological role, heterogeneous nuclear ribonucleoprotein (hnRNP) that associates with nascent pre-mRNAs, packaging them into hnRNP particles. The hnRNP particle arrangement on nascent hnRNA is non-random and sequence-dependent and serves to condense and stabilize the transcripts and minimize tangling and knotting. Packaging plays a role in various processes such as transcription, pre-mRNA processing, RNA nuclear export, subcellular location, mRNA translation and stability of mature mRNAs. Forms hnRNP particles with at least 20 other different hnRNP and heterogeneous nuclear RNA in the nucleus. Involved in transport of specific mRNAs to the cytoplasm in oligodendrocytes and neurons: acts by specifically recognizing and binding the A2RE (21 nucleotide hnRNP A2 response element) or the A2RE11 (derivative 11 nucleotide oligonucleotide) sequence motifs present on some mRNAs, and promotes their transport to the cytoplasm. Specifically binds single-stranded telomeric DNA sequences, protecting telomeric DNA repeat against endonuclease digestion. Also binds other RNA molecules, such as primary miRNA (pri-miRNAs): acts as a nuclear 'reader' of the N6-methyladenosine (m6A) mark by specifically recognizing and binding a subset of nuclear m6A-containing pri-miRNAs. Binding to m6A-containing pri-miRNAs promotes pri-miRNA processing by enhancing binding of DGCR8 to pri-miRNA transcripts. Involved in miRNA sorting into exosomes following sumoylation, possibly by binding (m6A)-containing pre-miRNAs. Acts as a regulator of efficiency of mRNA splicing, possibly by binding to m6A-containing pre-mRNAs. Plays a role in the splicing of pyruvate kinase PKM by binding repressively to sequences flanking PKM exon 9, inhibiting exon 9 inclusion and resulting in exon 10 inclusion and production of the PKM M2 isoform. Also plays a role in the activation of the innate immune response. Mechanistically, senses the presence of viral DNA in the nucleus, homodimerizes and is demethylated by JMJD6. In turn, translocates to the cytoplasm where it activates the TBK1-IRF3 pathway, leading to interferon alpha/beta production. (Microbial infection) Involved in the transport of HIV-1 genomic RNA out of the nucleus, to the microtubule organizing center (MTOC), and then from the MTOC to the cytoplasm: acts by specifically recognizing and binding the A2RE (21 nucleotide hnRNP A2 response element) sequence motifs present on HIV-1 genomic RNA, and promotes its transport. This chain is Heterogeneous nuclear ribonucleoproteins A2/B1 (HNRNPA2B1), found in Homo sapiens (Human).